A 97-amino-acid polypeptide reads, in one-letter code: uncharacterized protein (97 aa).

A signal peptide spans 1–16 (MKQTVLLLFTALFLSG). The N-palmitoyl cysteine moiety is linked to residue C17. C17 carries the S-diacylglycerol cysteine lipid modification.

It is found in the cell membrane. This is an uncharacterized protein from Bacillus subtilis (strain 168).